Consider the following 199-residue polypeptide: MDEDGLPIVGSGIDLTKVPPIQQKRTVAFLNQFVVHSVQFLNRFATVCEEKLSALSLRIQQIETTLNILEAKLSSIPGLEDVKVEAQHISESNISNGHLPSQPDAQSVVVSPQSDNNSMNDGILQKEEAKSENITTVSKDPRYARYLKMVQVGVPVMAIKNKMIAEGLNPDLLETPDAPVPDGEPEAEESSDSESSFSD.

Residues 47–76 (VCEEKLSALSLRIQQIETTLNILEAKLSSI) are a coiled coil. A compositionally biased stretch (polar residues) spans 93–120 (NISNGHLPSQPDAQSVVVSPQSDNNSMN). Disordered regions lie at residues 93 to 136 (NISN…NITT) and 170 to 199 (PDLL…SFSD). Acidic residues predominate over residues 183-192 (GEPEAEESSD).

Belongs to the CCDC53 family. In terms of assembly, component of the WASH complex.

In Xenopus laevis (African clawed frog), this protein is WASH complex subunit 3.